Here is a 109-residue protein sequence, read N- to C-terminus: Mitochondrial pyruvate carrier 2 (109 aa).

The next 3 membrane-spanning stretches (helical) occupy residues 19–35, 51–67, and 74–90; these read IHFW…IANI, IAVT…STII, and LFSV…YQLT.

Belongs to the mitochondrial pyruvate carrier (MPC) (TC 2.A.105) family.

Its subcellular location is the mitochondrion inner membrane. Functionally, mediates the uptake of pyruvate into mitochondria. The polypeptide is Mitochondrial pyruvate carrier 2 (Arabidopsis thaliana (Mouse-ear cress)).